The sequence spans 185 residues: Translocon-associated protein subunit gamma (185 aa).

Met1 is modified (N-acetylmethionine). Over 1–27 the chain is Lumenal; the sequence is MAPKGSSKQQSEEDLLLQDFSRNLSAK. Phosphoserine occurs at positions 7 and 11. A helical membrane pass occupies residues 28–48; that stretch reads SSALFFGNAFIVSAIPIWLYW. Over 49 to 54 the chain is Cytoplasmic; that stretch reads RIWHMD. Residues 55–76 traverse the membrane as a helical segment; sequence LIQSAVLYSVMTLVSTYLVAFA. Residues 77–135 lie on the Lumenal side of the membrane; the sequence is YKNVKFVLKHKVAQKREDAVSKEVTRKLSEADNRKMSRKEKDERILWKKNEVADYEATT. Phosphoserine is present on Ser105. Residues 136–157 form a helical membrane-spanning segment; that stretch reads FSIFYNNTLFLVVVIVASFFIL. At 158 to 163 the chain is on the cytoplasmic side; sequence KNFNPT. A helical transmembrane segment spans residues 164–184; the sequence is VNYILSISASSGLIALLSTGS.

Belongs to the TRAP-gamma family. As to quaternary structure, heterotetramer of TRAP-alpha, TRAP-beta, TRAP-delta and TRAP-gamma.

Its subcellular location is the endoplasmic reticulum membrane. Its function is as follows. TRAP proteins are part of a complex whose function is to bind calcium to the ER membrane and thereby regulate the retention of ER resident proteins. The protein is Translocon-associated protein subunit gamma (SSR3) of Homo sapiens (Human).